Consider the following 352-residue polypeptide: 3-isopropylmalate dehydrogenase (352 aa).

76 to 89 (GPKWENLPHEHKPE) serves as a coordination point for NAD(+). 4 residues coordinate substrate: arginine 96, arginine 106, arginine 134, and aspartate 219. Residues aspartate 219, aspartate 243, and aspartate 247 each contribute to the Mg(2+) site. An NAD(+)-binding site is contributed by 276–288 (GSAPDIAGQNKAN).

It belongs to the isocitrate and isopropylmalate dehydrogenases family. LeuB type 1 subfamily. As to quaternary structure, homodimer. Mg(2+) serves as cofactor. It depends on Mn(2+) as a cofactor.

The protein localises to the cytoplasm. The enzyme catalyses (2R,3S)-3-isopropylmalate + NAD(+) = 4-methyl-2-oxopentanoate + CO2 + NADH. Its pathway is amino-acid biosynthesis; L-leucine biosynthesis; L-leucine from 3-methyl-2-oxobutanoate: step 3/4. In terms of biological role, catalyzes the oxidation of 3-carboxy-2-hydroxy-4-methylpentanoate (3-isopropylmalate) to 3-carboxy-4-methyl-2-oxopentanoate. The product decarboxylates to 4-methyl-2 oxopentanoate. This Chlorobium chlorochromatii (strain CaD3) protein is 3-isopropylmalate dehydrogenase.